A 103-amino-acid chain; its full sequence is Non-histone chromosomal protein 6 (103 aa).

Disordered regions lie at residues 1-30 (MPKA…KRGL) and 70-103 (KQRA…EESS). The segment at residues 26-94 (PKRGLSAYMF…RYEDEKQAYN (69 aa)) is a DNA-binding region (HMG box). A compositionally biased stretch (basic and acidic residues) spans 70-91 (KQRAPYEAKAAADKKRYEDEKQ).

Belongs to the NHP6 family. As to quaternary structure, weakly associates with the stable heterodimer of ctc-1/pob3 and ctc-2/spt16 to form the FACT complex.

The protein localises to the nucleus. The protein resides in the chromosome. Its function is as follows. DNA-binding protein that induces severe bending of DNA. Required for DNA-binding by the FACT complex, a general chromatin factor that acts to reorganize nucleosomes. The FACT complex is involved in multiple processes that require DNA as a template such as mRNA elongation, DNA replication and DNA repair. Also augments the fidelity of transcription by RNA polymerase III independently of any role in the FACT complex. The polypeptide is Non-histone chromosomal protein 6 (nhp-1) (Neurospora crassa (strain ATCC 24698 / 74-OR23-1A / CBS 708.71 / DSM 1257 / FGSC 987)).